The sequence spans 247 residues: Proteasome subunit alpha (247 aa).

It belongs to the peptidase T1A family. The 20S proteasome core is composed of 14 alpha and 14 beta subunits that assemble into four stacked heptameric rings, resulting in a barrel-shaped structure. The two inner rings, each composed of seven catalytic beta subunits, are sandwiched by two outer rings, each composed of seven alpha subunits. The catalytic chamber with the active sites is on the inside of the barrel. Has a gated structure, the ends of the cylinder being occluded by the N-termini of the alpha-subunits. Is capped at one or both ends by the proteasome regulatory ATPase, PAN.

It localises to the cytoplasm. Its activity is regulated as follows. The formation of the proteasomal ATPase PAN-20S proteasome complex, via the docking of the C-termini of PAN into the intersubunit pockets in the alpha-rings, triggers opening of the gate for substrate entry. Interconversion between the open-gate and close-gate conformations leads to a dynamic regulation of the 20S proteasome proteolysis activity. Its function is as follows. Component of the proteasome core, a large protease complex with broad specificity involved in protein degradation. The protein is Proteasome subunit alpha of Methanosarcina thermophila.